Here is a 124-residue protein sequence, read N- to C-terminus: Large ribosomal subunit protein bL12 (124 aa).

The protein belongs to the bacterial ribosomal protein bL12 family. As to quaternary structure, homodimer. Part of the ribosomal stalk of the 50S ribosomal subunit. Forms a multimeric L10(L12)X complex, where L10 forms an elongated spine to which 2 to 4 L12 dimers bind in a sequential fashion. Binds GTP-bound translation factors.

Functionally, forms part of the ribosomal stalk which helps the ribosome interact with GTP-bound translation factors. Is thus essential for accurate translation. The sequence is that of Large ribosomal subunit protein bL12 from Bacteroides thetaiotaomicron (strain ATCC 29148 / DSM 2079 / JCM 5827 / CCUG 10774 / NCTC 10582 / VPI-5482 / E50).